The sequence spans 914 residues: Ral guanine nucleotide dissociation stimulator (914 aa).

An N-terminal Ras-GEF domain is found at 112–249 (KVRTVKAGTL…RAHLLLAQLE (138 aa)). The segment at 280-365 (ARAPSPVPAP…APVPSLQPSW (86 aa)) is disordered. Positions 282–300 (APSPVPAPAPEPEPAPTPA) are enriched in pro residues. A compositionally biased stretch (low complexity) spans 304–338 (ELEVAPAPAPELQQAPEPAVGLESAPAPALELEPA). The 263-residue stretch at 386-648 (PPDLVAEQFT…YNLSCELEPP (263 aa)) folds into the Ras-GEF domain. Disordered regions lie at residues 666–689 (KRWSDRQAPSTELSTSGSSHSKSC) and 728–776 (PESP…RTHK). 2 stretches are compositionally biased toward low complexity: residues 675–686 (STELSTSGSSHS) and 745–772 (SSPETSGISSASSSTSSSSASTTPVAAT). The Ras-associating domain occupies 798–885 (DCCIIRVSLD…YDFVLKKRTF (88 aa)). Tyr814 carries the post-translational modification Phosphotyrosine; by MET.

Interacts with RIT1 and RIT2. Interacts with OOG1. Interacts with TRAF3. Interacts with HRAS. Post-translationally, phosphorylation of Tyr-814 by MET blocks HRAS binding.

Its subcellular location is the cytoplasm. It is found in the nucleus. Functions as a guanine nucleotide exchange factor (GEF) activating either RalA or RalB GTPases and plays an important role in intracellular transport. Interacts and acts as an effector molecule for R-Ras, H-Ras, K-Ras, and Rap. During bacterial clearance, recognizes 'Lys-33'-linked polyubiquitinated TRAF3 and subsequently mediates assembly of the exocyst complex. This Homo sapiens (Human) protein is Ral guanine nucleotide dissociation stimulator (RALGDS).